The primary structure comprises 524 residues: NAD(P)H-quinone oxidoreductase chain 4, chloroplastic (524 aa).

14 helical membrane-spanning segments follow: residues 4–24 (YPWL…IPLI), 31–51 (LIRW…TYVF), 87–107 (IALV…AWPV), 113–133 (LFYF…LAQD), 134–154 (LLLF…LLSM), 167–187 (FILY…TISL), 211–231 (ILVY…FPFH), 242–262 (HYST…YGFI), 275–295 (IFAP…ALVS), 308–328 (SSVS…DLGL), 330–350 (GAIL…FLAG), 386–406 (LALP…GIVA), 417–437 (IITC…LSMV), and 465–485 (VFII…PDLT).

Belongs to the complex I subunit 4 family.

The protein resides in the plastid. Its subcellular location is the chloroplast thylakoid membrane. The catalysed reaction is a plastoquinone + NADH + (n+1) H(+)(in) = a plastoquinol + NAD(+) + n H(+)(out). It carries out the reaction a plastoquinone + NADPH + (n+1) H(+)(in) = a plastoquinol + NADP(+) + n H(+)(out). The polypeptide is NAD(P)H-quinone oxidoreductase chain 4, chloroplastic (Staurastrum punctulatum (Green alga)).